Reading from the N-terminus, the 591-residue chain is PE-PGRS family protein PE_PGRS5 (591 aa).

A PE domain is found at 1–93; it reads MSFVIAQPEM…AGAYASAEAA (93 aa). A PGRS region spans residues 94–591; the sequence is NAGPNMLAAV…GGKGNNGNPG (498 aa). Gly residues-rich tracts occupy residues 303-324, 336-363, 371-412, 477-491, 539-567, and 579-591; these read GAGGAGGAGGDGAPGGNGGNGG, ASGGNGATGGNGGVGAPGGAGGNGGHVS, GAGG…GDGG, SEAGDGGKGGLGGDG, AGTGGDGGVGGTGAAGGKGGAGGSGGVNG, and GATGGKGNNGNPG. Disordered regions lie at residues 303–412, 468–491, and 539–591; these read GAGG…GDGG, GSVNTPIGGSEAGDGGKGGLGGDG, and AGTG…GNPG.

Belongs to the mycobacterial PE family. PGRS subfamily. Interacts with human TLR4.

Its subcellular location is the host endoplasmic reticulum. Its function is as follows. Involved in endoplasmic reticulum (ER) stress-mediated apoptosis through human Toll-like receptor 4 (TLR4) signaling pathway. Localizes to the host ER, leading to ER stress, disruption of intracellular Ca(2+) homeostasis and increase of nitric oxide (NO) and reactive oxygen species (ROS) levels. Stress response results in caspase-8 activation and apoptosis of macrophage cells. Apoptosis may lead to dissemination of the bacteria, thereby spreading the disease. The polypeptide is PE-PGRS family protein PE_PGRS5 (Mycobacterium tuberculosis (strain ATCC 25618 / H37Rv)).